A 300-amino-acid polypeptide reads, in one-letter code: Solute carrier family 25 member 35 (300 aa).

Solcar repeat units lie at residues 1-90 (MDFL…AEAG), 100-193 (HSPA…TKDL), and 203-294 (QSWK…LRSL). Transmembrane regions (helical) follow at residues 38–58 (TYQR…KVDG), 59–79 (LAAL…MNGI), 91–119 (GYLH…GAYL), 169–190 (ALGG…FSST), 205–225 (WKLA…AMAP), and 277–300 (LGPH…TDTK).

The protein belongs to the mitochondrial carrier (TC 2.A.29) family.

It localises to the mitochondrion inner membrane. The enzyme catalyses a dicarboxylate(in) + sulfate(out) = a dicarboxylate(out) + sulfate(in). Functionally, putative antiporter that exchanges dicarboxylates and sulfur oxoanions across the inner membrane of mitochondria. This chain is Solute carrier family 25 member 35 (SLC25A35), found in Homo sapiens (Human).